A 451-amino-acid polypeptide reads, in one-letter code: MESSPIPQSSGNSSTLGRVPQTPGPSTASGVPEVGLRDVASESVALFFMLLLDLTAVAGNAAVMAVIAKTPALRKFVFVFHLCLVDLLAALTLMPLAMLSSSALFDHALFGEVACRLYLFLSVCFVSLAILSVSAINVERYYYVVHPMRYEVRMTLGLVASVLVGVWVKALAMASVPVLGRVSWEEGAPSVPPGCSLQWSHSAYCQLFVVVFAVLYFLLPLLLILVVYCSMFRVARVAAMQHGPLPTWMETPRQRSESLSSRSTMVTSSGAPQTTPHRTFGGGKAAVVLLAVGGQFLLCWLPYFSFHLYVALSAQPISTGQVESVVTWIGYFCFTSNPFFYGCLNRQIRGELSKQFVCFFKPAPEEELRLPSREGSIEENFLQFLQGTGCPSESWVSRPLPSPKQEPPAVDFRIPGQIAEETSEFLEQQLTSDIIMSDSYLRPAASPRLES.

Residues 1–14 (MESSPIPQSSGNSS) show a composition bias toward low complexity. The segment at 1 to 31 (MESSPIPQSSGNSSTLGRVPQTPGPSTASGV) is disordered. Over 1-44 (MESSPIPQSSGNSSTLGRVPQTPGPSTASGVPEVGLRDVASESV) the chain is Extracellular. Asparagine 12 carries N-linked (GlcNAc...) asparagine glycosylation. Residues 45 to 67 (ALFFMLLLDLTAVAGNAAVMAVI) traverse the membrane as a helical segment. Residues 68 to 75 (AKTPALRK) are Cytoplasmic-facing. The helical transmembrane segment at 76–98 (FVFVFHLCLVDLLAALTLMPLAM) threads the bilayer. Over 99–112 (LSSSALFDHALFGE) the chain is Extracellular. A helical transmembrane segment spans residues 113–135 (VACRLYLFLSVCFVSLAILSVSA). Residues 136-155 (INVERYYYVVHPMRYEVRMT) lie on the Cytoplasmic side of the membrane. A helical transmembrane segment spans residues 156–178 (LGLVASVLVGVWVKALAMASVPV). Residues 179–206 (LGRVSWEEGAPSVPPGCSLQWSHSAYCQ) lie on the Extracellular side of the membrane. A helical transmembrane segment spans residues 207–229 (LFVVVFAVLYFLLPLLLILVVYC). Residues 230–287 (SMFRVARVAAMQHGPLPTWMETPRQRSESLSSRSTMVTSSGAPQTTPHRTFGGGKAAV) are Cytoplasmic-facing. A helical membrane pass occupies residues 288-310 (VLLAVGGQFLLCWLPYFSFHLYV). Residues 311-324 (ALSAQPISTGQVES) are Extracellular-facing. Residues 325–344 (VVTWIGYFCFTSNPFFYGCL) form a helical membrane-spanning segment. The Cytoplasmic portion of the chain corresponds to 345–451 (NRQIRGELSK…RPAASPRLES (107 aa)).

It belongs to the G-protein coupled receptor 1 family. As to quaternary structure, forms heterodimer with MTNR1B. Interacts with ARRB1 and ARRB2 in a spontaneous and agonist-independent manner; leading to the internalization of GPR61 in the endosomal compartment. Expressed in brain; detected in frontal and temporal lobes, occipital pole, amygdala and hippocampus. Also expressed in testis and T cells, B cells, and monocyte. Low expression in many other tissues. Widely expressed in the hippocampus (at protein level).

It is found in the cell membrane. The protein localises to the endosome membrane. Orphan G-protein coupled receptor. Constitutively activates the G(s)-alpha/cAMP signaling pathway. Shows a reciprocal regulatory interaction with the melatonin receptor MTNR1B most likely through receptor heteromerization. May be involved in the regulation of food intake and body weight. This chain is G-protein coupled receptor 61 (GPR61), found in Homo sapiens (Human).